We begin with the raw amino-acid sequence, 788 residues long: Probable potassium transporter 9 (788 aa).

Over 1–21 the chain is Cytoplasmic; sequence MDPEFGRGMAPRKREPWRTTL. A helical membrane pass occupies residues 22–42; that stretch reads LLAYQSLGVVYGDLSISPLYV. The Extracellular portion of the chain corresponds to 43-59; it reads YKSTFAEDITHSESNEE. The helical transmembrane segment at 60-80 threads the bilayer; that stretch reads IFGVLSFVFWTLTLIPLIKYV. The Cytoplasmic portion of the chain corresponds to 81–151; that stretch reads SIVLRADDNG…EKHKTLQTAL (71 aa). Residues 152–172 traverse the membrane as a helical segment; that stretch reads LIMVMIGTCMVIGDGVLTPAI. The Extracellular portion of the chain corresponds to 173-191; the sequence is SVFSAVSGLELSLSRDQHE. Residues 192 to 212 form a helical membrane-spanning segment; it reads YAVIPITCVILVFLFALQHYG. The Cytoplasmic portion of the chain corresponds to 213–215; the sequence is THR. Residues 216–236 traverse the membrane as a helical segment; that stretch reads VGFLFAPIVLAWLICMSMLGL. Residues 237–264 are Extracellular-facing; the sequence is YNIIHWNPQVYRALNPYYMLKFLRKTKK. Residues 265–285 traverse the membrane as a helical segment; the sequence is SGWMSLGGILLCMTGSEAMFA. Residues 286–292 lie on the Cytoplasmic side of the membrane; that stretch reads DLGHFSY. A helical transmembrane segment spans residues 293–313; it reads SAIQLAFTTLVYPALILGYMG. The Extracellular portion of the chain corresponds to 314 to 343; the sequence is QAAYLSKHHTLNSTYQIGYYISVPESVRWP. The N-linked (GlcNAc...) asparagine glycan is linked to N325. The chain crosses the membrane as a helical span at residues 344 to 364; the sequence is VLVLAILASVVGSQAIISGTF. Topologically, residues 365 to 391 are cytoplasmic; the sequence is SIINQSQSLSCFPRVKVVHTSENIHGQ. A helical transmembrane segment spans residues 392–412; the sequence is IYIPEINWLLMVLCIAVTVGF. The Extracellular segment spans residues 413-422; the sequence is RDTKHMGNAS. The N-linked (GlcNAc...) asparagine glycan is linked to N420. A helical transmembrane segment spans residues 423–443; that stretch reads GLAVITVMLVTTCLTSLVIML. Residues 444–451 are Cytoplasmic-facing; it reads CWHRSPAL. A helical transmembrane segment spans residues 452–472; that stretch reads ALVFFLFFGSIEVLYFSASLI. Residues 473-476 lie on the Extracellular side of the membrane; that stretch reads KFRE. The helical transmembrane segment at 477–497 threads the bilayer; it reads GAWLPIMLALILMAVMFIWHH. Topologically, residues 498–788 are cytoplasmic; it reads TTIKKYEFDL…LLEVGMVYVL (291 aa).

It belongs to the HAK/KUP transporter (TC 2.A.72.3) family.

The protein localises to the membrane. Its function is as follows. High-affinity potassium transporter. The protein is Probable potassium transporter 9 (HAK9) of Oryza sativa subsp. japonica (Rice).